Consider the following 137-residue polypeptide: Large ribosomal subunit protein uL16 (137 aa).

The protein belongs to the universal ribosomal protein uL16 family. In terms of assembly, part of the 50S ribosomal subunit.

Binds 23S rRNA and is also seen to make contacts with the A and possibly P site tRNAs. This is Large ribosomal subunit protein uL16 from Brucella abortus (strain S19).